Consider the following 797-residue polypeptide: Ribosome biogenesis protein BOP1 homolog (797 aa).

2 disordered regions span residues Leu-22–Pro-112 and Ser-149–Val-177. Low complexity predominate over residues Ala-61–Ala-73. Residues Pro-74–Ala-87 show a composition bias toward acidic residues. Positions Gly-90–Pro-112 are enriched in gly residues. 7 WD repeats span residues Gly-462–Thr-502, Val-504–Glu-544, Arg-581–Pro-623, Lys-626–Lys-664, Gly-667–Lys-706, Tyr-710–Thr-749, and Thr-766–Asn-797.

It belongs to the WD repeat BOP1/ERB1 family.

The protein localises to the nucleus. The protein resides in the nucleolus. It localises to the nucleoplasm. Functionally, required for maturation of ribosomal RNAs and formation of the large ribosomal subunit. The polypeptide is Ribosome biogenesis protein BOP1 homolog (Chlamydomonas reinhardtii (Chlamydomonas smithii)).